A 563-amino-acid chain; its full sequence is Membrane protein insertase YidC (563 aa).

A helical transmembrane segment spans residues 1–21; that stretch reads MDIKRTILIVALAIVTYVGVL. The disordered stretch occupies residues 43–62; the sequence is APGIPDTAAGTNGSASADVP. Transmembrane regions (helical) follow at residues 344–364, 370–390, 440–460, 471–491, and 518–538; these read LELTVDYGFLWFIAQPIFWLL, ILGNWGWSIIVLTMLIKGLFF, LGGCLPILVQMPVFLSLYWVL, WILWITDLSIKDPFFILPIIM, and PIIFTFFFLWFPAGLVLYWVV.

The protein belongs to the OXA1/ALB3/YidC family. Type 1 subfamily. Interacts with the Sec translocase complex via SecD. Specifically interacts with transmembrane segments of nascent integral membrane proteins during membrane integration.

It is found in the cell inner membrane. Its function is as follows. Required for the insertion and/or proper folding and/or complex formation of integral membrane proteins into the membrane. Involved in integration of membrane proteins that insert both dependently and independently of the Sec translocase complex, as well as at least some lipoproteins. Aids folding of multispanning membrane proteins. The sequence is that of Membrane protein insertase YidC from Pseudomonas syringae pv. syringae (strain B728a).